The primary structure comprises 293 residues: Nitrogenase iron protein (293 aa).

10–17 (GKGGIGKS) lines the ATP pocket. Position 98 (cysteine 98) interacts with [4Fe-4S] cluster. Arginine 101 is subject to ADP-ribosylarginine; by dinitrogenase reductase ADP-ribosyltransferase. [4Fe-4S] cluster is bound at residue cysteine 133.

Belongs to the NifH/BchL/ChlL family. As to quaternary structure, homodimer. [4Fe-4S] cluster is required as a cofactor. The reversible ADP-ribosylation of Arg-101 inactivates the nitrogenase reductase and regulates nitrogenase activity.

It catalyses the reaction N2 + 8 reduced [2Fe-2S]-[ferredoxin] + 16 ATP + 16 H2O = H2 + 8 oxidized [2Fe-2S]-[ferredoxin] + 2 NH4(+) + 16 ADP + 16 phosphate + 6 H(+). Functionally, the key enzymatic reactions in nitrogen fixation are catalyzed by the nitrogenase complex, which has 2 components: the iron protein and the molybdenum-iron protein. The polypeptide is Nitrogenase iron protein (Klebsiella pneumoniae (strain 342)).